Reading from the N-terminus, the 366-residue chain is Chorismate synthase (366 aa).

NADP(+) contacts are provided by Arg48 and Arg54. FMN is bound by residues 125–127, 238–239, Gly278, 293–297, and Arg319; these read RSS, NA, and KPTSS.

This sequence belongs to the chorismate synthase family. In terms of assembly, homotetramer. FMNH2 serves as cofactor.

The enzyme catalyses 5-O-(1-carboxyvinyl)-3-phosphoshikimate = chorismate + phosphate. The protein operates within metabolic intermediate biosynthesis; chorismate biosynthesis; chorismate from D-erythrose 4-phosphate and phosphoenolpyruvate: step 7/7. In terms of biological role, catalyzes the anti-1,4-elimination of the C-3 phosphate and the C-6 proR hydrogen from 5-enolpyruvylshikimate-3-phosphate (EPSP) to yield chorismate, which is the branch point compound that serves as the starting substrate for the three terminal pathways of aromatic amino acid biosynthesis. This reaction introduces a second double bond into the aromatic ring system. This chain is Chorismate synthase, found in Neisseria meningitidis serogroup A / serotype 4A (strain DSM 15465 / Z2491).